We begin with the raw amino-acid sequence, 593 residues long: DNA primase (593 aa).

The CHC2-type zinc-finger motif lies at C38 to C62. A Toprim domain is found at N250–P332. Mg(2+) contacts are provided by E256, D300, and D302.

Belongs to the DnaG primase family. As to quaternary structure, monomer. Interacts with DnaB. The cofactor is Zn(2+). It depends on Mg(2+) as a cofactor.

It catalyses the reaction ssDNA + n NTP = ssDNA/pppN(pN)n-1 hybrid + (n-1) diphosphate.. In terms of biological role, RNA polymerase that catalyzes the synthesis of short RNA molecules used as primers for DNA polymerase during DNA replication. This Rickettsia typhi (strain ATCC VR-144 / Wilmington) protein is DNA primase.